We begin with the raw amino-acid sequence, 676 residues long: Protein timeless (676 aa).

The segment at Val77–Lys108 is necessary for normal circadian rhythm. Disordered regions lie at residues Glu94 to Arg145 and Pro346 to Arg398. Composition is skewed to low complexity over residues Ser101 to Gly129 and Gln360 to Pro369. A Nuclear localization signal motif is present at residues Lys388–Arg398.

The protein belongs to the timeless family. In terms of assembly, forms a heterodimer with period (PER); the complex then translocates into the nucleus. In terms of processing, phosphorylated with a circadian rhythmicity.

It localises to the nucleus. Its subcellular location is the cytoplasm. The protein resides in the perinuclear region. In terms of biological role, required for the production of circadian rhythms. The biological cycle depends on the rhythmic formation and nuclear localization of the TIM-PER complex. Light induces the degradation of TIM, which promotes elimination of PER. Nuclear activity of the heterodimer coordinatively regulates PER and TIM transcription through a negative feedback loop. Behaves as a negative element in circadian transcriptional loop. Does not appear to bind DNA, suggesting indirect transcriptional inhibition. The sequence is that of Protein timeless (tim) from Drosophila hydei (Fruit fly).